The following is a 173-amino-acid chain: Flavodoxin (173 aa).

The Flavodoxin-like domain occupies 2-168 (IGIFFSTSTG…RVAGWVEAVV (167 aa)).

Belongs to the flavodoxin family. Requires FMN as cofactor.

Functionally, low-potential electron donor to a number of redox enzymes. This Chondrus crispus (Carrageen Irish moss) protein is Flavodoxin.